A 732-amino-acid polypeptide reads, in one-letter code: Phosphoribosylformylglycinamidine synthase subunit PurL (732 aa).

Histidine 42 is a catalytic residue. Residues tyrosine 45 and lysine 84 each coordinate ATP. Glutamate 86 is a Mg(2+) binding site. Substrate is bound by residues 87–90 and arginine 109; that span reads SHNH. Histidine 88 functions as the Proton acceptor in the catalytic mechanism. A Mg(2+)-binding site is contributed by aspartate 110. Residue glutamine 238 participates in substrate binding. Residue aspartate 266 participates in Mg(2+) binding. A substrate-binding site is contributed by 310–312; sequence ESQ. Positions 496 and 533 each coordinate ATP. Asparagine 534 contacts Mg(2+). Serine 536 serves as a coordination point for substrate.

This sequence belongs to the FGAMS family. As to quaternary structure, monomer. Part of the FGAM synthase complex composed of 1 PurL, 1 PurQ and 2 PurS subunits.

It is found in the cytoplasm. It catalyses the reaction N(2)-formyl-N(1)-(5-phospho-beta-D-ribosyl)glycinamide + L-glutamine + ATP + H2O = 2-formamido-N(1)-(5-O-phospho-beta-D-ribosyl)acetamidine + L-glutamate + ADP + phosphate + H(+). It functions in the pathway purine metabolism; IMP biosynthesis via de novo pathway; 5-amino-1-(5-phospho-D-ribosyl)imidazole from N(2)-formyl-N(1)-(5-phospho-D-ribosyl)glycinamide: step 1/2. In terms of biological role, part of the phosphoribosylformylglycinamidine synthase complex involved in the purines biosynthetic pathway. Catalyzes the ATP-dependent conversion of formylglycinamide ribonucleotide (FGAR) and glutamine to yield formylglycinamidine ribonucleotide (FGAM) and glutamate. The FGAM synthase complex is composed of three subunits. PurQ produces an ammonia molecule by converting glutamine to glutamate. PurL transfers the ammonia molecule to FGAR to form FGAM in an ATP-dependent manner. PurS interacts with PurQ and PurL and is thought to assist in the transfer of the ammonia molecule from PurQ to PurL. The protein is Phosphoribosylformylglycinamidine synthase subunit PurL of Campylobacter hominis (strain ATCC BAA-381 / DSM 21671 / CCUG 45161 / LMG 19568 / NCTC 13146 / CH001A).